Consider the following 185-residue polypeptide: Peptidyl-tRNA hydrolase (185 aa).

TRNA is bound at residue Tyr-14. The active-site Proton acceptor is the His-19. Positions 64, 66, and 112 each coordinate tRNA.

Belongs to the PTH family. In terms of assembly, monomer.

It localises to the cytoplasm. The catalysed reaction is an N-acyl-L-alpha-aminoacyl-tRNA + H2O = an N-acyl-L-amino acid + a tRNA + H(+). Hydrolyzes ribosome-free peptidyl-tRNAs (with 1 or more amino acids incorporated), which drop off the ribosome during protein synthesis, or as a result of ribosome stalling. Functionally, catalyzes the release of premature peptidyl moieties from peptidyl-tRNA molecules trapped in stalled 50S ribosomal subunits, and thus maintains levels of free tRNAs and 50S ribosomes. The protein is Peptidyl-tRNA hydrolase of Lactobacillus johnsonii (strain CNCM I-12250 / La1 / NCC 533).